A 152-amino-acid chain; its full sequence is Nucleoside diphosphate kinase (152 aa).

K11, F59, R87, T93, R104, and N114 together coordinate ATP. H117 serves as the catalytic Pros-phosphohistidine intermediate.

This sequence belongs to the NDK family. In terms of assembly, homotetramer. Requires Mg(2+) as cofactor.

It is found in the cytoplasm. The catalysed reaction is a 2'-deoxyribonucleoside 5'-diphosphate + ATP = a 2'-deoxyribonucleoside 5'-triphosphate + ADP. It carries out the reaction a ribonucleoside 5'-diphosphate + ATP = a ribonucleoside 5'-triphosphate + ADP. In terms of biological role, major role in the synthesis of nucleoside triphosphates other than ATP. The ATP gamma phosphate is transferred to the NDP beta phosphate via a ping-pong mechanism, using a phosphorylated active-site intermediate. The polypeptide is Nucleoside diphosphate kinase (Prochlorococcus marinus (strain MIT 9312)).